Reading from the N-terminus, the 372-residue chain is N-methyl-L-tryptophan oxidase (372 aa).

An FAD-binding site is contributed by 4 to 34 (DLIIIGSGSVGAAAGYYATRAGLNVLMTDAH). At C308 the chain carries S-8alpha-FAD cysteine.

This sequence belongs to the MSOX/MTOX family. MTOX subfamily. Monomer. FAD serves as cofactor.

The enzyme catalyses N(alpha)-methyl-L-tryptophan + O2 + H2O = L-tryptophan + formaldehyde + H2O2. Its function is as follows. Catalyzes the oxidative demethylation of N-methyl-L-tryptophan. The protein is N-methyl-L-tryptophan oxidase of Shigella flexneri serotype 5b (strain 8401).